A 264-amino-acid chain; its full sequence is 5'-nucleotidase SurE (264 aa).

4 residues coordinate a divalent metal cation: Asp-12, Asp-13, Ser-43, and Asn-98.

Belongs to the SurE nucleotidase family. A divalent metal cation serves as cofactor.

It is found in the cytoplasm. It catalyses the reaction a ribonucleoside 5'-phosphate + H2O = a ribonucleoside + phosphate. In terms of biological role, nucleotidase that shows phosphatase activity on nucleoside 5'-monophosphates. The polypeptide is 5'-nucleotidase SurE (Sulfurovum sp. (strain NBC37-1)).